A 179-amino-acid chain; its full sequence is Cell division protein SepF (179 aa).

The interval 22–53 (LPYEKRDEPVFTPVNSSQEPALPMNQPSQSVG) is disordered. A compositionally biased stretch (polar residues) spans 34 to 53 (PVNSSQEPALPMNQPSQSVG).

The protein belongs to the SepF family. In terms of assembly, homodimer. Interacts with FtsZ.

It localises to the cytoplasm. In terms of biological role, cell division protein that is part of the divisome complex and is recruited early to the Z-ring. Probably stimulates Z-ring formation, perhaps through the cross-linking of FtsZ protofilaments. Its function overlaps with FtsA. This Streptococcus pneumoniae (strain P1031) protein is Cell division protein SepF.